Consider the following 284-residue polypeptide: Tropomyosin (284 aa).

Methionine 1 carries the N-acetylmethionine modification. 2 disordered regions span residues 1-49 and 103-126; these read MDAI…NQKK and EERL…SERM. A coiled-coil region spans residues 1–284; it reads MDAIKKKMQA…DQAFSELSGF (284 aa). Residues 12–45 show a composition bias toward basic and acidic residues; sequence KLEKDNAMDKADTLEQQNKEANLRAEKTEEEIRA.

Belongs to the tropomyosin family. In terms of assembly, homodimer. Expressed in leg muscle and chest protection muscle (at protein level).

Tropomyosin, in association with the troponin complex, plays a central role in the calcium dependent regulation of muscle contraction. This is Tropomyosin from Chionoecetes opilio (Atlantic snow crab).